A 48-amino-acid polypeptide reads, in one-letter code: Large ribosomal subunit protein bL33A (48 aa).

It belongs to the bacterial ribosomal protein bL33 family.

The protein is Large ribosomal subunit protein bL33A of Metamycoplasma arthritidis (strain 158L3-1) (Mycoplasma arthritidis).